Consider the following 216-residue polypeptide: Uracil-DNA glycosylase (216 aa).

Residue Asp59 is the Proton acceptor of the active site.

It belongs to the uracil-DNA glycosylase (UDG) superfamily. UNG family.

The protein resides in the cytoplasm. It catalyses the reaction Hydrolyzes single-stranded DNA or mismatched double-stranded DNA and polynucleotides, releasing free uracil.. In terms of biological role, excises uracil residues from the DNA which can arise as a result of misincorporation of dUMP residues by DNA polymerase or due to deamination of cytosine. This is Uracil-DNA glycosylase from Idiomarina loihiensis (strain ATCC BAA-735 / DSM 15497 / L2-TR).